The primary structure comprises 284 residues: MTILDGKKLSEKIKDNLKKEVDELKTKGITPGLAVILVGDDPASHTYVKMKRNACQKVGIYSVVHEFPESITEKELLSTIKMINENPNIHGLLIQLPLPKHIDTTKILEAVDPSKDVDGFHPYNMGRLVEGLDTFAPCTPLGVMEIFEEYEIDLKGKDVCVVGASNIVGKPMWALLVNAWATVDICHIETKDLAAHTKRADIVIVGVGKPNLITADMVKDGVIVIDIGINRLEDGRLVGDVDFENVSKKASYITPVPGGVGPMTIAMLLKNTVKAAKNFAKEVK.

Residues 163 to 165 (GAS), Ile188, and Ile229 each bind NADP(+).

The protein belongs to the tetrahydrofolate dehydrogenase/cyclohydrolase family. Homodimer.

It catalyses the reaction (6R)-5,10-methylene-5,6,7,8-tetrahydrofolate + NADP(+) = (6R)-5,10-methenyltetrahydrofolate + NADPH. The catalysed reaction is (6R)-5,10-methenyltetrahydrofolate + H2O = (6R)-10-formyltetrahydrofolate + H(+). It functions in the pathway one-carbon metabolism; tetrahydrofolate interconversion. Its function is as follows. Catalyzes the oxidation of 5,10-methylenetetrahydrofolate to 5,10-methenyltetrahydrofolate and then the hydrolysis of 5,10-methenyltetrahydrofolate to 10-formyltetrahydrofolate. This chain is Bifunctional protein FolD, found in Nautilia profundicola (strain ATCC BAA-1463 / DSM 18972 / AmH).